The chain runs to 142 residues: Large ribosomal subunit protein uL13 (142 aa).

It belongs to the universal ribosomal protein uL13 family. As to quaternary structure, part of the 50S ribosomal subunit.

Its function is as follows. This protein is one of the early assembly proteins of the 50S ribosomal subunit, although it is not seen to bind rRNA by itself. It is important during the early stages of 50S assembly. This chain is Large ribosomal subunit protein uL13, found in Alcanivorax borkumensis (strain ATCC 700651 / DSM 11573 / NCIMB 13689 / SK2).